Consider the following 283-residue polypeptide: Pantothenate synthetase (283 aa).

30-37 is a binding site for ATP; it reads MGNLHSGH. His-37 acts as the Proton donor in catalysis. Gln-61 lines the (R)-pantoate pocket. Gln-61 is a beta-alanine binding site. 149-152 provides a ligand contact to ATP; sequence GEKD. Gln-155 contributes to the (R)-pantoate binding site. Residues Val-178 and 186–189 contribute to the ATP site; that span reads LSSR.

Belongs to the pantothenate synthetase family. In terms of assembly, homodimer.

Its subcellular location is the cytoplasm. The catalysed reaction is (R)-pantoate + beta-alanine + ATP = (R)-pantothenate + AMP + diphosphate + H(+). It participates in cofactor biosynthesis; (R)-pantothenate biosynthesis; (R)-pantothenate from (R)-pantoate and beta-alanine: step 1/1. Its function is as follows. Catalyzes the condensation of pantoate with beta-alanine in an ATP-dependent reaction via a pantoyl-adenylate intermediate. The polypeptide is Pantothenate synthetase (Pseudomonas savastanoi pv. phaseolicola (strain 1448A / Race 6) (Pseudomonas syringae pv. phaseolicola (strain 1448A / Race 6))).